We begin with the raw amino-acid sequence, 1011 residues long: MGAYARASGVCARGCLDSAGPWTMSRALRPPLPPLCFFLLLLAAAGARAGGYETCPTVQPNMLNVHLLPHTHDDVGWLKTVDQYFYGIKNDIQHAGVQYILDSVISALLADPTRRFIYVEIAFFSRWWHQQTNATQEVVRDLVRQGRLEFANGGWVMNDEAATHYGAIVDQMTLGLRFLEDTFGNDGRPRVAWHIDPFGHSREQASLFAQMGFDGFFFGRLDYQDKWVRMQKLEMEQVWRASTSLKPPTADLFTGVLPNGYNPPRNLCWDVLCVDQPLVEDPRSPEYNAKELVDYFLNVATAQGRYYRTNHTVMTMGSDFQYENANMWFKNLDKLIRLVNAQQAKGSSVHVLYSTPACYLWELNKANLTWSVKHDDFFPYADGPHQFWTGYFSSRPALKRYERLSYNFLQVCNQLEALVGLAANVGPYGSGDSAPLNEAMAVLQHHDAVSGTSRQHVANDYARQLAAGWGPCEVLLSNALARLRGFKDHFTFCQQLNISICPLSQTAARFQVIVYNPLGRKVNWMVRLPVSEGVFVVKDPNGRTVPSDVVIFPSSDSQAHPPELLFSASLPALGFSTYSVAQVPRWKPQARAPQPIPRRSWSPALTIENEHIRATFDPDTGLLMEIMNMNQQLLLPVRQTFFWYNASIGDNESDQASGAYIFRPNQQKPLPVSRWAQIHLVKTPLVQEVHQNFSAWCSQVVRLYPGQRHLELEWSVGPIPVGDTWGKEVISRFDTPLETKGRFYTDSNGREILERRRDYRPTWKLNQTEPVAGNYYPVNTRIYITDGNMQLTVLTDRSQGGSSLRDGSLELMVHRRLLKDDGRGVSEPLMENGSGAWVRGRHLVLLDTAQAAAAGHRLLAEQEVLAPQVVLAPGGGAAYNLGAPPRTQFSGLRRDLPPSVHLLTLASWGPEMVLLRLEHQFAVGEDSGRNLSAPVTLNLRDLFSTFTITRLQETTLVANQLREAASRLKWTTNTGPTPHQTPYQLDPANITLEPMEIRTFLASVQWKEVDG.

The signal sequence occupies residues 1 to 49 (MGAYARASGVCARGCLDSAGPWTMSRALRPPLPPLCFFLLLLAAAGARA). 2 disulfides stabilise this stretch: cysteine 55/cysteine 358 and cysteine 268/cysteine 273. The Zn(2+) site is built by histidine 72 and aspartate 74. N-linked (GlcNAc...) asparagine glycosylation occurs at asparagine 133. Aspartate 196 contacts Zn(2+). The active-site Nucleophile is the aspartate 196. N-linked (GlcNAc...) asparagine glycans are attached at residues asparagine 310 and asparagine 367. Intrachain disulfides connect cysteine 412–cysteine 472 and cysteine 493–cysteine 501. Residue histidine 446 participates in Zn(2+) binding. Residues asparagine 497, asparagine 645, asparagine 651, asparagine 692, asparagine 766, asparagine 832, asparagine 930, and asparagine 989 are each glycosylated (N-linked (GlcNAc...) asparagine).

This sequence belongs to the glycosyl hydrolase 38 family. The cofactor is Zn(2+). Post-translationally, first processed into 3 peptides of 70 kDa, 42 kDa (D) and 13/15 kDa (E). The 70 kDa peptide is further processed into three peptides (A, B and C). The A, B and C peptides are disulfide-linked. In terms of processing, heavily glycosylated.

It is found in the lysosome. The enzyme catalyses Hydrolysis of terminal, non-reducing alpha-D-mannose residues in alpha-D-mannosides.. Its function is as follows. Necessary for the catabolism of N-linked carbohydrates released during glycoprotein turnover. Cleaves all known types of alpha-mannosidic linkages. The protein is Lysosomal alpha-mannosidase (MAN2B1) of Homo sapiens (Human).